The sequence spans 679 residues: Methionine--tRNA ligase (679 aa).

A 'HIGH' region motif is present at residues 15–25 (PYANGPVHIGH). 4 residues coordinate Zn(2+): Cys147, Cys150, Cys160, and Cys163. The short motif at 332–336 (KISTS) is the 'KMSKS' region element. Thr335 provides a ligand contact to ATP. Residues 578–679 (DFMKLDIRVG…KEVKPGSEVK (102 aa)) form the tRNA-binding domain.

This sequence belongs to the class-I aminoacyl-tRNA synthetase family. MetG type 1 subfamily. Homodimer. Zn(2+) serves as cofactor.

It is found in the cytoplasm. The enzyme catalyses tRNA(Met) + L-methionine + ATP = L-methionyl-tRNA(Met) + AMP + diphosphate. Functionally, is required not only for elongation of protein synthesis but also for the initiation of all mRNA translation through initiator tRNA(fMet) aminoacylation. The protein is Methionine--tRNA ligase of Parabacteroides distasonis (strain ATCC 8503 / DSM 20701 / CIP 104284 / JCM 5825 / NCTC 11152).